The sequence spans 207 residues: Ras-related protein Rab-8A (207 aa).

Residues Ser17, Gly18, Val19, Gly20, Lys21, Thr22, Cys23, Ser39, and Thr40 each contribute to the GTP site. Thr22 provides a ligand contact to Mg(2+). 2 short sequence motifs (switch) span residues 31-45 (DAFN…GIDF) and 63-80 (DTAG…YYRG). The Mg(2+) site is built by Thr40 and Asp63. GTP contacts are provided by Gly66, Asn121, Lys122, Asp124, Ala152, and Lys153. Cys204 bears the Cysteine methyl ester mark. Cys204 is lipidated: S-geranylgeranyl cysteine. Positions 205-207 (VLL) are cleaved as a propeptide — removed in mature form.

The protein belongs to the small GTPase superfamily. Rab family. Mg(2+) is required as a cofactor.

It localises to the cell membrane. It is found in the golgi apparatus. Its subcellular location is the endosome membrane. The protein localises to the recycling endosome membrane. The protein resides in the cell projection. It localises to the cilium. It is found in the cytoplasmic vesicle. Its subcellular location is the phagosome membrane. The protein localises to the cytoplasm. The protein resides in the cytoskeleton. It localises to the microtubule organizing center. It is found in the centrosome. Its subcellular location is the centriole. The protein localises to the cilium basal body. The protein resides in the midbody. The catalysed reaction is GTP + H2O = GDP + phosphate + H(+). Its activity is regulated as follows. Regulated by guanine nucleotide exchange factors (GEFs) which promote the exchange of bound GDP for free GTP, GTPase activating proteins (GAPs) which increase the GTP hydrolysis activity, and GDP dissociation inhibitors (GDIs) which inhibit the dissociation of the nucleotide from the GTPase. Activated in response to insulin. In terms of biological role, the small GTPases Rab are key regulators of intracellular membrane trafficking, from the formation of transport vesicles to their fusion with membranes. Rabs cycle between an inactive GDP-bound form and an active GTP-bound form that is able to recruit to membranes different sets of downstream effectors directly responsible for vesicle formation, movement, tethering and fusion. RAB8A is involved in polarized vesicular trafficking and neurotransmitter release. Together with RAB11A, RAB3IP, the exocyst complex, PARD3, PRKCI, ANXA2, CDC42 and DNMBP promotes transcytosis of PODXL to the apical membrane initiation sites (AMIS), apical surface formation and lumenogenesis. Regulates the compacted morphology of the Golgi. Together with MYO5B and RAB11A participates in epithelial cell polarization. Also involved in membrane trafficking to the cilium and ciliogenesis. Together with MICALL2, may also regulate adherens junction assembly. May play a role in insulin-induced transport to the plasma membrane of the glucose transporter GLUT4 and therefore play a role in glucose homeostasis. Involved in autophagy. Participates in the export of a subset of neosynthesized proteins through a Rab8-Rab10-Rab11-dependent endososomal export route. Targeted to and stabilized on stressed lysosomes through LRRK2 phosphorylation. Suppresses stress-induced lysosomal enlargement through EHBP1 and EHNP1L1 effector proteins. The polypeptide is Ras-related protein Rab-8A (RAB8A) (Gallus gallus (Chicken)).